The chain runs to 197 residues: uncharacterized protein (197 aa).

4 helical membrane-spanning segments follow: residues 30–50, 61–81, 101–121, and 130–150; these read WVAM…VEMA, LVAG…PPLV, LWSV…LGLA, and IGEF…VAML.

It localises to the cell membrane. This is an uncharacterized protein from Mycobacterium tuberculosis (strain CDC 1551 / Oshkosh).